The sequence spans 1132 residues: Tyrosine-protein kinase JAK2 (1132 aa).

The tract at residues 1 to 239 (MGMACLTMTE…RYRFRRFIQQ (239 aa)) is interaction with cytokine/interferon/growth hormone receptors. The region spanning 37-380 (PVLQVYLYHS…GYYRLTADAH (344 aa)) is the FERM domain. Position 119 is a phosphotyrosine; by autocatalysis (Tyr119). A phosphotyrosine mark is found at Tyr372 and Tyr373. The SH2; atypical domain occupies 401 to 482 (HGPISMDFAI…NLKDLLNCYQ (82 aa)). At Ser523 the chain carries Phosphoserine. The Protein kinase 1 domain occupies 545-809 (LIFNESLGQG…AVIRDLNSLF (265 aa)). 2 positions are modified to phosphotyrosine: Tyr570 and Tyr813. One can recognise a Protein kinase 2 domain in the interval 849–1124 (LKFLQQLGKG…SFRDLSLRVD (276 aa)). ATP is bound at residue 855 to 863 (LGKGNFGSV). Phosphotyrosine; by autocatalysis is present on Tyr868. Lys882 is a binding site for ATP. Residues Tyr966 and Tyr972 each carry the phosphotyrosine; by autocatalysis modification. Asp976 acts as the Proton acceptor in catalysis. Tyr1007 and Tyr1008 each carry phosphotyrosine; by autocatalysis.

It belongs to the protein kinase superfamily. Tyr protein kinase family. JAK subfamily. Interacts with IL23R, SKB1 and STAM2. Interacts with EPOR. Interacts with LYN. Interacts with SIRPA. Interacts with SH2B1. Interacts with TEC. Interacts with IFNGR2 (via intracellular domain). Interacts with LEPR (Isoform B). Interacts with HSP90AB1; promotes functional activation in a heat shock-dependent manner. Interacts with STRA6. Interacts with ASB2; the interaction targets JAK2 for Notch-induced proteasomal degradation. Interacts with MPL/TPOR. Mg(2+) is required as a cofactor. In terms of processing, autophosphorylated, leading to regulate its activity. Leptin promotes phosphorylation on tyrosine residues, including phosphorylation on Tyr-813. Autophosphorylation on Tyr-119 in response to EPO down-regulates its kinase activity. Autophosphorylation on Tyr-868, Tyr-966 and Tyr-972 in response to growth hormone (GH) are required for maximal kinase activity. Also phosphorylated by TEC. Phosphorylated on tyrosine residues in response to interferon gamma signaling. Phosphorylated on tyrosine residues in response to a signaling cascade that is activated by increased cellular retinol. Post-translationally, undergoes Notch-induced ubiquitination and subsequent proteasomal degradation which is mediated by ASB1 or ASB2, the substrate-recognition components of probable ECS E3 ubiquitin-protein ligase complexes. As to expression, ubiquitously expressed throughout most tissues.

It localises to the endomembrane system. The protein localises to the cytoplasm. The protein resides in the nucleus. It catalyses the reaction L-tyrosyl-[protein] + ATP = O-phospho-L-tyrosyl-[protein] + ADP + H(+). Regulated by autophosphorylation, can both activate or decrease activity. Heme regulates its activity by enhancing the phosphorylation on Tyr-1007 and Tyr-1008. In terms of biological role, non-receptor tyrosine kinase involved in various processes such as cell growth, development, differentiation or histone modifications. Mediates essential signaling events in both innate and adaptive immunity. In the cytoplasm, plays a pivotal role in signal transduction via its association with type I receptors such as growth hormone (GHR), prolactin (PRLR), leptin (LEPR), erythropoietin (EPOR), thrombopoietin receptor (MPL/TPOR); or type II receptors including IFN-alpha, IFN-beta, IFN-gamma and multiple interleukins. Following ligand-binding to cell surface receptors, phosphorylates specific tyrosine residues on the cytoplasmic tails of the receptor, creating docking sites for STATs proteins. Subsequently, phosphorylates the STATs proteins once they are recruited to the receptor. Phosphorylated STATs then form homodimer or heterodimers and translocate to the nucleus to activate gene transcription. For example, cell stimulation with erythropoietin (EPO) during erythropoiesis leads to JAK2 autophosphorylation, activation, and its association with erythropoietin receptor (EPOR) that becomes phosphorylated in its cytoplasmic domain. Then, STAT5 (STAT5A or STAT5B) is recruited, phosphorylated and activated by JAK2. Once activated, dimerized STAT5 translocates into the nucleus and promotes the transcription of several essential genes involved in the modulation of erythropoiesis. Part of a signaling cascade that is activated by increased cellular retinol and that leads to the activation of STAT5 (STAT5A or STAT5B). In addition, JAK2 mediates angiotensin-2-induced ARHGEF1 phosphorylation. Plays a role in cell cycle by phosphorylating CDKN1B. Cooperates with TEC through reciprocal phosphorylation to mediate cytokine-driven activation of FOS transcription. In the nucleus, plays a key role in chromatin by specifically mediating phosphorylation of 'Tyr-41' of histone H3 (H3Y41ph), a specific tag that promotes exclusion of CBX5 (HP1 alpha) from chromatin. Up-regulates the potassium voltage-gated channel activity of KCNA3. This Mus musculus (Mouse) protein is Tyrosine-protein kinase JAK2.